Here is a 238-residue protein sequence, read N- to C-terminus: Ribonuclease PH (238 aa).

Phosphate contacts are provided by residues Arg86 and 124 to 126 (GTR).

Belongs to the RNase PH family. In terms of assembly, homohexameric ring arranged as a trimer of dimers.

The enzyme catalyses tRNA(n+1) + phosphate = tRNA(n) + a ribonucleoside 5'-diphosphate. Phosphorolytic 3'-5' exoribonuclease that plays an important role in tRNA 3'-end maturation. Removes nucleotide residues following the 3'-CCA terminus of tRNAs; can also add nucleotides to the ends of RNA molecules by using nucleoside diphosphates as substrates, but this may not be physiologically important. Probably plays a role in initiation of 16S rRNA degradation (leading to ribosome degradation) during starvation. The protein is Ribonuclease PH of Acinetobacter baylyi (strain ATCC 33305 / BD413 / ADP1).